The following is a 139-amino-acid chain: D-ribose pyranase (139 aa).

H20 acts as the Proton donor in catalysis. Residues D28, H106, and 128–130 (YAN) contribute to the substrate site.

This sequence belongs to the RbsD / FucU family. RbsD subfamily. In terms of assembly, homodecamer.

The protein localises to the cytoplasm. The catalysed reaction is beta-D-ribopyranose = beta-D-ribofuranose. Its pathway is carbohydrate metabolism; D-ribose degradation; D-ribose 5-phosphate from beta-D-ribopyranose: step 1/2. Catalyzes the interconversion of beta-pyran and beta-furan forms of D-ribose. This chain is D-ribose pyranase, found in Pectobacterium carotovorum subsp. carotovorum (strain PC1).